The chain runs to 210 residues: Imidazole glycerol phosphate synthase subunit HisH 1 (210 aa).

The region spanning 3–210 (KIAIVDYGMC…LDNFLSFSNV (208 aa)) is the Glutamine amidotransferase type-1 domain. Residue Cys82 is the Nucleophile of the active site. Residues His189 and Glu191 contribute to the active site.

Heterodimer of HisH and HisF.

It localises to the cytoplasm. It carries out the reaction 5-[(5-phospho-1-deoxy-D-ribulos-1-ylimino)methylamino]-1-(5-phospho-beta-D-ribosyl)imidazole-4-carboxamide + L-glutamine = D-erythro-1-(imidazol-4-yl)glycerol 3-phosphate + 5-amino-1-(5-phospho-beta-D-ribosyl)imidazole-4-carboxamide + L-glutamate + H(+). It catalyses the reaction L-glutamine + H2O = L-glutamate + NH4(+). Its pathway is amino-acid biosynthesis; L-histidine biosynthesis; L-histidine from 5-phospho-alpha-D-ribose 1-diphosphate: step 5/9. Functionally, IGPS catalyzes the conversion of PRFAR and glutamine to IGP, AICAR and glutamate. The HisH subunit provides the glutamine amidotransferase activity that produces the ammonia necessary to HisF for the synthesis of IGP and AICAR. The sequence is that of Imidazole glycerol phosphate synthase subunit HisH 1 (hisH1) from Parasynechococcus marenigrum (strain WH8102).